Here is a 62-residue protein sequence, read N- to C-terminus: Photosystem II reaction center protein Z (62 aa).

2 consecutive transmembrane segments (helical) span residues 8 to 28 (ALFA…IVFA) and 41 to 61 (FSGT…NSLI).

It belongs to the PsbZ family. PSII is composed of 1 copy each of membrane proteins PsbA, PsbB, PsbC, PsbD, PsbE, PsbF, PsbH, PsbI, PsbJ, PsbK, PsbL, PsbM, PsbT, PsbY, PsbZ, Psb30/Ycf12, at least 3 peripheral proteins of the oxygen-evolving complex and a large number of cofactors. It forms dimeric complexes.

Its subcellular location is the plastid. It localises to the chloroplast thylakoid membrane. Its function is as follows. May control the interaction of photosystem II (PSII) cores with the light-harvesting antenna, regulates electron flow through the 2 photosystem reaction centers. PSII is a light-driven water plastoquinone oxidoreductase, using light energy to abstract electrons from H(2)O, generating a proton gradient subsequently used for ATP formation. This Drimys granadensis protein is Photosystem II reaction center protein Z.